Consider the following 367-residue polypeptide: Molybdopterin synthase catalytic subunit (367 aa).

Substrate is bound by residues 101 to 102 (HR), Lys117, and 124 to 126 (KKE). A disordered region spans residues 326-345 (HFTKREPSSMEAAPPKKIRK).

This sequence belongs to the MoaE family. MOCS2B subfamily. Heterotetramer; composed of 2 small (Mocs2A) and 2 large (Mocs2B) subunits.

It localises to the cytoplasm. The catalysed reaction is 2 [molybdopterin-synthase sulfur-carrier protein]-C-terminal-Gly-aminoethanethioate + cyclic pyranopterin phosphate + H2O = molybdopterin + 2 [molybdopterin-synthase sulfur-carrier protein]-C-terminal Gly-Gly + 2 H(+). It participates in cofactor biosynthesis; molybdopterin biosynthesis. Catalytic subunit of the molybdopterin synthase complex, a complex that catalyzes the conversion of precursor Z into molybdopterin. Acts by mediating the incorporation of 2 sulfur atoms from thiocarboxylated Mocs2A into precursor Z to generate a dithiolene group. The polypeptide is Molybdopterin synthase catalytic subunit (Drosophila sechellia (Fruit fly)).